Consider the following 748-residue polypeptide: Catalase-peroxidase (748 aa).

Residues 1-16 are compositionally biased toward polar residues; that stretch reads MSSDTSASRPPQPDTR. The tract at residues 1-43 is disordered; it reads MSSDTSASRPPQPDTRTASKSESENPAIPSPHPKSNAPLTNRD. Positions 113 to 238 form a cross-link, tryptophyl-tyrosyl-methioninium (Trp-Tyr) (with M-264); the sequence is WHAAGTYRIH…YGATTMGLIY (126 aa). Residue His114 is the Proton acceptor of the active site. A cross-link (tryptophyl-tyrosyl-methioninium (Tyr-Met) (with W-113)) is located at residues 238-264; it reads YVNPEGPEGKPDPIAAAIDIRETFGRM. A heme b-binding site is contributed by His279.

Belongs to the peroxidase family. Peroxidase/catalase subfamily. Homodimer or homotetramer. Heme b is required as a cofactor. In terms of processing, formation of the three residue Trp-Tyr-Met cross-link is important for the catalase, but not the peroxidase activity of the enzyme.

It catalyses the reaction H2O2 + AH2 = A + 2 H2O. The enzyme catalyses 2 H2O2 = O2 + 2 H2O. Bifunctional enzyme with both catalase and broad-spectrum peroxidase activity. This is Catalase-peroxidase from Mycolicibacterium paratuberculosis (strain ATCC BAA-968 / K-10) (Mycobacterium paratuberculosis).